We begin with the raw amino-acid sequence, 319 residues long: Cutinase cut1 (319 aa).

The N-terminal stretch at 1-58 is a signal peptide; the sequence is MPPHAARPGPAQNRRGRAMAVITPRRERSSLLSRALRFTAAAATALVTAVSLAAPAHA. Residue tyrosine 118 coordinates poly(ethylene terephthalate). Residue serine 188 is the Nucleophile of the active site. 2 residues coordinate poly(ethylene terephthalate): methionine 189 and tryptophan 213. Residues aspartate 234 and histidine 266 each act as charge relay system in the active site. An intrachain disulfide couples cysteine 299 to cysteine 317.

The protein belongs to the AB hydrolase superfamily.

Its subcellular location is the secreted. The protein localises to the periplasm. The enzyme catalyses an acetyl ester + H2O = an aliphatic alcohol + acetate + H(+). It carries out the reaction a butanoate ester + H2O = an aliphatic alcohol + butanoate + H(+). It catalyses the reaction pentanoate ester + H2O = pentanoate + an aliphatic alcohol + H(+). The catalysed reaction is an octanoate ester + H2O = an aliphatic alcohol + octanoate + H(+). The enzyme catalyses decanoate ester + H2O = decanoate + an aliphatic alcohol + H(+). It carries out the reaction a dodecanoate ester + H2O = an aliphatic alcohol + dodecanoate + H(+). It catalyses the reaction a tetradecanoate ester + H2O = an aliphatic alcohol + tetradecanoate + H(+). The catalysed reaction is hexadecanoate ester + H2O = an aliphatic alcohol + hexadecanoate + H(+). The enzyme catalyses cutin + H2O = cutin monomers.. It carries out the reaction (ethylene terephthalate)(n) + H2O = (ethylene terephthalate)(n-1) + 4-[(2-hydroxyethoxy)carbonyl]benzoate + H(+). Activated by magnesium ions. Activated by calcium ions. Functionally, catalyzes the hydrolysis of cutin, a polyester that forms the structure of plant cuticle. Shows esterase activity towards p-nitrophenol-linked aliphatic esters (pNP-aliphatic esters). Capable of degrading the plastic poly(ethylene terephthalate) (PET), the most abundant polyester plastic in the world. The chain is Cutinase cut1 from Thermobifida fusca (Thermomonospora fusca).